Here is a 349-residue protein sequence, read N- to C-terminus: AA9 family lytic polysaccharide monooxygenase C (349 aa).

A signal peptide spans 1–19; that stretch reads MKSTFGLLALAAAAKLVSA. The Cu(2+) site is built by His-20 and His-102. The cysteines at positions 62 and 183 are disulfide-linked. His-169 provides a ligand contact to O2. Position 180 (Tyr-180) interacts with Cu(2+). The tract at residues 233–304 is disordered; the sequence is DGSSSGSSGS…SGSNSGSDSC (72 aa). Low complexity-rich tracts occupy residues 234–262 and 269–304; these read GSSS…AAPT and TSAT…SDSC. The CBM1 domain maps to 311 to 347; sequence GSVKIYGQCGGQNYSGPTSCEAGLICKEWNPYYHQCV. 2 disulfides stabilise this stretch: Cys-319-Cys-336 and Cys-330-Cys-346. A glycan (N-linked (GlcNAc...) asparagine) is linked at Asn-323.

This sequence belongs to the polysaccharide monooxygenase AA9 family. Requires Cu(2+) as cofactor.

The protein localises to the secreted. The catalysed reaction is [(1-&gt;4)-beta-D-glucosyl]n+m + reduced acceptor + O2 = 4-dehydro-beta-D-glucosyl-[(1-&gt;4)-beta-D-glucosyl]n-1 + [(1-&gt;4)-beta-D-glucosyl]m + acceptor + H2O.. Functionally, lytic polysaccharide monooxygenase (LPMO) that depolymerizes crystalline and amorphous polysaccharides via the oxidation of scissile alpha- or beta-(1-4)-glycosidic bonds, yielding C4 oxidation products. Catalysis by LPMOs requires the reduction of the active-site copper from Cu(II) to Cu(I) by a reducing agent and H(2)O(2) or O(2) as a cosubstrate. Active on cellulose and cello-oligosaccharides, as well as plant cell wall-derived hemicellulosic polysaccharides. Also active on cello-oligosaccharides such as cellohexaose, cellopentaose or cellotetraose. The chain is AA9 family lytic polysaccharide monooxygenase C from Aspergillus fumigatus (strain ATCC MYA-4609 / CBS 101355 / FGSC A1100 / Af293) (Neosartorya fumigata).